A 208-amino-acid polypeptide reads, in one-letter code: Large ribosomal subunit protein bL25 (208 aa).

Belongs to the bacterial ribosomal protein bL25 family. CTC subfamily. As to quaternary structure, part of the 50S ribosomal subunit; part of the 5S rRNA/L5/L18/L25 subcomplex. Contacts the 5S rRNA. Binds to the 5S rRNA independently of L5 and L18.

In terms of biological role, this is one of the proteins that binds to the 5S RNA in the ribosome where it forms part of the central protuberance. The chain is Large ribosomal subunit protein bL25 from Burkholderia thailandensis (strain ATCC 700388 / DSM 13276 / CCUG 48851 / CIP 106301 / E264).